Consider the following 567-residue polypeptide: Frizzled-7 (567 aa).

An N-terminal signal peptide occupies residues M1–A31. Topologically, residues A32 to W250 are extracellular. The 120-residue stretch at P42–Q161 folds into the FZ domain. Disulfide bonds link C47–C108, C55–C101, C92–C129, C118–C158, and C122–C146. N61 is a glycosylation site (N-linked (GlcNAc...) asparagine). N-linked (GlcNAc...) asparagine glycosylation occurs at N162. The chain crosses the membrane as a helical span at residues V251–V271. Residues D272–P282 are Cytoplasmic-facing. A helical transmembrane segment spans residues I283 to L303. Over E304–C330 the chain is Extracellular. The chain crosses the membrane as a helical span at residues T331–L351. Topologically, residues S352 to Q373 are cytoplasmic. Residues Y374–G394 form a helical membrane-spanning segment. The Extracellular portion of the chain corresponds to Q395–G417. A helical membrane pass occupies residues F418–F438. The Cytoplasmic portion of the chain corresponds to V439–R464. The helical transmembrane segment at I465–Y485 threads the bilayer. Topologically, residues E486–T521 are extracellular. The chain crosses the membrane as a helical span at residues V522–W542. Residues S543–V567 are Cytoplasmic-facing. The Lys-Thr-X-X-X-Trp motif, mediates interaction with the PDZ domain of Dvl family members signature appears at K545 to W550. A PDZ-binding motif is present at residues T565 to V567.

The protein belongs to the G-protein coupled receptor Fz/Smo family. In terms of tissue distribution, expressed broadly in cranial ectoderm. Also expressed in the developing somites and in other cranial placodes, including the olfactory, lens, otic placodes (lateral half of the vesicle) and epibranchial placodes. Low level of expression in all the mesoderm derivatives in the limb buds.

It localises to the cell membrane. The protein resides in the endosome membrane. Receptor for Wnt proteins. Most of frizzled receptors are coupled to the beta-catenin canonical signaling pathway, which leads to the activation of disheveled proteins, inhibition of GSK-3 kinase, nuclear accumulation of beta-catenin and activation of Wnt target genes. A second signaling pathway involving PKC and calcium fluxes has been seen for some family members, but it is not yet clear if it represents a distinct pathway or if it can be integrated in the canonical pathway, as PKC seems to be required for Wnt-mediated inactivation of GSK-3 kinase. Both pathways seem to involve interactions with G-proteins. May be involved in transduction and intercellular transmission of polarity information during tissue morphogenesis and/or in differentiated tissues. The polypeptide is Frizzled-7 (FZD7) (Gallus gallus (Chicken)).